The following is a 64-amino-acid chain: DNA gyrase inhibitor YacG (64 aa).

Cys9, Cys12, Cys28, and Cys32 together coordinate Zn(2+). A disordered region spans residues Lys45–Pro64. Acidic residues predominate over residues Ser54–Pro64.

Belongs to the DNA gyrase inhibitor YacG family. In terms of assembly, interacts with GyrB. Zn(2+) is required as a cofactor.

Its function is as follows. Inhibits all the catalytic activities of DNA gyrase by preventing its interaction with DNA. Acts by binding directly to the C-terminal domain of GyrB, which probably disrupts DNA binding by the gyrase. The protein is DNA gyrase inhibitor YacG of Klebsiella pneumoniae subsp. pneumoniae (strain ATCC 700721 / MGH 78578).